A 507-amino-acid chain; its full sequence is Cyclic GMP-AMP synthase (507 aa).

The interval 1–146 is DNA-binding; that stretch reads MEDPRRRTTA…PRAPRGSRKE (146 aa). The tract at residues 1-151 is disordered; the sequence is MEDPRRRTTA…GSRKEPDKLK (151 aa). The span at 7–18 shows a compositional bias: basic residues; it reads RTTAPRAKKPSA. A compositionally biased stretch (basic and acidic residues) spans 44-57; the sequence is RRAERDGDTTEKPR. Residues 48–59 are required for association with the cell membrane; it reads RDGDTTEKPRAP. Position 52 is a phosphothreonine (Thr-52). The required for activation upon DNA viral infection stretch occupies residues 119 to 132; that stretch reads RKVVRGPSHRRGAR. Residues 121–131 show a composition bias toward basic residues; sequence VVRGPSHRRGA. The short motif at 154-159 is the Nuclear export signal element; that stretch reads LDKLRL. Lys-156 bears the N6-lactoyllysine mark. Positions 158-201 are DNA-binding; it reads RLKRKDISEAAETVNKVVERLLRRMQKRESEFKGVEQLNTGSYY. PolyADP-ribosyl glutamic acid is present on Glu-176. Thr-197 serves as a coordination point for GTP. Ser-199 provides a ligand contact to ATP. Residue Ser-199 is modified to Phosphoserine. Residue Tyr-201 is modified to Phosphotyrosine. Mg(2+) contacts are provided by Glu-211 and Asp-213. Asp-213 lines the 2',3'-cGAMP pocket. Lys-217 is covalently cross-linked (Glycyl lysine isopeptide (Lys-Gly) (interchain with G-Cter in SUMO)). Lys-271 participates in a covalent cross-link: Glycyl lysine isopeptide (Lys-Gly) (interchain with G-Cter in ubiquitin). Glu-272 is modified (5-glutamyl polyglutamate). The Nuclear localization signal signature appears at 281–291; sequence DVSVEKEKPGS. Gly-290 contacts 2',3'-cGAMP. Phosphoserine; by CDK1 and PKB is present on Ser-291. A 5-glutamyl glutamate modification is found at Glu-302. Asp-307 contacts GTP. Residue Asp-307 participates in Mg(2+) binding. Asp-307 lines the 2',3'-cGAMP pocket. The interval 329-370 is interaction with collided ribosomes; that stretch reads QGWLGTKVRTNLRREPFYLVPKNAKDGNSFQGETWRLSFSHT. Residue Lys-335 forms a Glycyl lysine isopeptide (Lys-Gly) (interchain with G-Cter in SUMO); alternate linkage. Residue Lys-335 forms a Glycyl lysine isopeptide (Lys-Gly) (interchain with G-Cter in ubiquitin); alternate linkage. 2',3'-cGAMP is bound by residues Lys-350 and 364–366; that span reads RLS. 364–371 is a binding site for GTP; that stretch reads RLSFSHTE. Glu-371 is an ATP binding site. Lys-372 is covalently cross-linked (Glycyl lysine isopeptide (Lys-Gly) (interchain with G-Cter in SUMO); alternate). A Glycyl lysine isopeptide (Lys-Gly) (interchain with G-Cter in ubiquitin); alternate cross-link involves residue Lys-372. Lys-372 is subject to N6-acetyllysine. The DNA-binding stretch occupies residues 372–395; sequence KYILNNHGIEKTCCESSGAKCCRK. His-378 contacts Zn(2+). Lys-382 participates in a covalent cross-link: Glycyl lysine isopeptide (Lys-Gly) (interchain with G-Cter in SUMO). At Lys-382 the chain carries N6-acetyllysine. Positions 384, 385, and 392 each coordinate Zn(2+). Residues Cys-392 and Cys-393 are each lipidated (S-palmitoyl cysteine). Glycyl lysine isopeptide (Lys-Gly) (interchain with G-Cter in ubiquitin) cross-links involve residues Lys-399, Lys-402, Lys-409, and Lys-410. Lys-402 contacts ATP. The residue at position 402 (Lys-402) is an N6-acetyllysine. Residue Ser-420 is modified to Phosphoserine. 420–424 provides a ligand contact to ATP; it reads SYHVK. Cys-459 carries S-palmitoyl cysteine lipidation. Lys-464 participates in a covalent cross-link: Glycyl lysine isopeptide (Lys-Gly) (interchain with G-Cter in SUMO); alternate. Lys-464 is covalently cross-linked (Glycyl lysine isopeptide (Lys-Gly) (interchain with G-Cter in ubiquitin); alternate). N6-methyllysine is present on Lys-491.

Belongs to the mab-21 family. In terms of assembly, monomer in the absence of DNA. Homodimer in presence of dsDNA: forms a 2:2 dimer with two enzymes binding to two DNA molecules. Interacts with nucleosomes; interaction is mainly mediated via histones H2A and H2B and inactivates the nucleotidyltransferase activity by blocking DNA-binding and subsequent activation. Interacts with PQBP1 (via WW domain). Interacts with TRIM14; this interaction recruits USP14, leading to deubiquitinate and stabilize CGAS and promote type I interferon production. Interacts with ZCCHC3; promoting sensing of dsDNA by CGAS. Interacts (when not monomethylated) with (poly-ADP-ribosylated) PARP1; interaction takes place in the nucleus and prevents the formation of the PARP1-TIMELESS complex. Interacts (when monomethylated) with SGF29; interaction with SGF29 prevents interaction with PARP1. Interacts with PCBP2; preventing the formation of liquid-like droplets in which CGAS is activated. Interacts with Irgm1; promoting CGAS degradation. Interacts with DDX41. Mg(2+) is required as a cofactor. Mn(2+) serves as cofactor. It depends on Zn(2+) as a cofactor. In terms of processing, the N-terminal disordered part (1-146) is phosphorylated by AURKB during the G2-M transition, blocking CGAS liquid phase separation and preventing activation. Phosphorylation at Tyr-201 by BLK promotes cytosolic retention. Localizes into the nucleus following dephosphorylation at Tyr-201. Phosphorylation at Ser-420 activates the nucleotidyltransferase activity. Dephosphorylation at Ser-420 by PPP6C impairs its ability to bind GTP, thereby inactivating it. Phosphorylation at Thr-52 and Ser-199 by PRKDC inhibits its cyclic GMP-AMP synthase activity by impairing homodimerization and activation. Phosphorylation at Ser-291 by AKT (AKT1, AKT2 or AKT3) suppresses the nucleotidyltransferase activity. Phosphorylation at Ser-291 by CDK1 during mitosis leads to its inhibition, thereby preventing CGAS activation by self-DNA during mitosis. Dephosphorylated at Ser-291 by protein phosphatase PP1 upon mitotic exit. Post-translationally, ubiquitinated at Lys-402 via 'Lys-48'-linked polyubiquitin chains, leading to its SQSTM1-mediated autophagic degradation. Interaction with TRIM14 promotes recruitment of USP14, leading to deubiquitinate Lys-402 and stabilize CGAS. Ubiquitinated at Lys-372 by RNF185 via 'Lys-27'-linked polyubiquitination, promoting CGAS cyclic GMP-AMP synthase activity. Monoubiquitination at Lys-335 by TRIM56 promotes oligomerization and subsequent activation. Monoubiquitination by TRIM41 promotes CGAS activation. Ubiquitination at Lys-271 and Lys-464 via 'Lys-48'-linked polyubiquitination promotes its degradation. Deubiquitination at Lys-271 by USP29 promotes its stabilization. Deubiquitinated by USP27X, promoting its stabilization. Ubiquitinated at Lys-399 via 'Lys-63'-linked polyubiquitin chains by MARCHF8, leading to the inhibition of its DNA binding ability. In cycling cells, nucleosome-bound CGAS is ubiquitinated at Lys-409 and Lys-410 via 'Lys-48'-linked polyubiquitin chains by the ECS(SPSB3) complex, leading to its degradation: ubiquitination and degradation of nuclear CGAS during G1 and G2 phases is required to promote low intranuclear CGAS abundance before the next mitotic cycle. Sumoylated at Lys-217 and Lys-464 by TRIM38 in uninfected cells and during the early phase of viral infection, promoting its stability by preventing ubiquitination at Lys-271 and Lys-464, and subsequent degradation. Desumoylated by SENP2 during the late phase of viral infection. Sumoylation at Lys-335, Lys-372 and Lys-382 prevents DNA-binding, oligomerization and nucleotidyltransferase activity. Desumoylation at Lys-335, Lys-372 and Lys-382 by SENP7 relieves inhibition and activates CGAS. In terms of processing, polyglutamylated by TTLL6 at Glu-272, leading to impair DNA-binding activity. Monoglutamylated at Glu-302 by TTLL4, leading to impair the nucleotidyltransferase activity. Deglutamylated by AGBL5/CCP5 and AGBL6/CCP6. Post-translationally, acetylation at Lys-372, Lys-382 and Lys-402 inhibits the cyclic GMP-AMP synthase activity. Deacetylated upon cytosolic DNA challenge such as viral infections. Acetylation by KAT5 increases the cyclic GMP-AMP synthase activity by promoting DNA-binding and subsequent activation. Proteolytically cleaved by apoptotic caspases during apoptosis, leading to its inactivation. The damage of the nucleus and the mitochondria during apoptosis leads to leakage of nuclear and mitochondrial DNA, which activate CGAS: cleavage and inactivation during apoptosis in required to prevent cytokine overproduction. Cleaved by CASP7 and CASP3 during virus-induced apoptosis, thereby inactivating it and preventing cytokine overproduction. Cleaved by CASP1 upon DNA virus infection; the cleavage impairs cGAMP production. Also cleaved by the pyroptotic CASP4 during non-canonical inflammasome activation; does not cut at the same sites than CASP1. In terms of processing, degraded via selective autophagy following interaction with Irgm1. Irgm1 promotes CGAS recruitment to autophagosome membranes, promoting its SQSTM1/p62-dependent autophagic degradation. Post-translationally, poly-ADP-ribosylation at Glu-176 by PARP1 impairs DNA-binding, thereby preventing the cyclic GMP-AMP synthase activity. Palmitoylation at Cys-459 by ZDHHC18 impairs DNA-binding, thereby preventing the cyclic GMP-AMP synthase activity. Palmitoylation at Cys-392 and Cys-393 by ZDHHC9 promotes homodimerization and cyclic GMP-AMP synthase activity. Depalmitoylation at Cys-392 and Cys-393 by LYPLAL1 impairs homodimerization and cyclic GMP-AMP synthase activity. In terms of processing, monomethylated at Lys-491 by SETD7. Monomethylation promotes interaction with SGF29, preventing interaction between PARP1 nad SGF29. Demethylation by RIOX1 promotes interaction with PARP1, followed by PARP1 inactivation. Post-translationally, lactylation by AARS2 prevents ability to undergo liquid-liquid phase separation (LLPS), thereby inhibiting CGAS activation.

It localises to the nucleus. It is found in the chromosome. The protein localises to the cell membrane. Its subcellular location is the cytoplasm. The protein resides in the cytosol. The enzyme catalyses GTP + ATP = 2',3'-cGAMP + 2 diphosphate. It catalyses the reaction GTP + ATP = pppGp(2'-5')A + diphosphate. It carries out the reaction pppGp(2'-5')A = 2',3'-cGAMP + diphosphate. Its activity is regulated as follows. The enzyme activity is strongly increased by double-stranded DNA (dsDNA), but not by single-stranded DNA or RNA. DNA-binding induces the formation of liquid-like droplets in which CGAS is activated. Liquid-like droplets also create a selective environment that restricts entry of negative regulators, such as TREX1 or BANF1/BAF, allowing sensing of DNA. A number of mechanisms exist to restrict its activity toward self-DNA. The nucleotidyltransferase activity is inhibited in the nucleus via its association with nucleosomes: interacts with the acidic patch of histones H2A and H2B, thereby blocking DNA-binding and subsequent activation. CGAS is also inactive when associated with mitotic chromatin. Chromatin-bound CGAS cannot be activated by exogenous DNA in mitotic cells: phosphorylation of the N-terminal disordered part by AURKB during the G2-M transition blocks CGAS liquid phase separation and activation. Activity toward self-DNA is inhibited by BANF1/BAF upon acute loss of nuclear membrane integrity: BANF1/BAF acts by outcompeting CGAS for DNA-binding, thereby preventing CGAS activation. DNA-induced activation at micronuclei is also limited by TREX1, which degrades micronuclear DNA upon nuclear envelope rupture, thereby preventing CGAS activation. CGAS can be released from nucleosomes and activated by MRE11 component of the MRN complex, which displaces CGAS from acidic-patch-mediated sequestration. Acetylation at Lys-372, Lys-382 and Lys-402 inhibits the cyclic GMP-AMP synthase activity. Acetylation by KAT5 increases the cyclic GMP-AMP synthase activity by promoting DNA-binding and subsequent activation. Phosphorylation at Ser-291 suppresses the nucleotidyltransferase activity. Phosphorylation at Ser-420 promotes the cyclic GMP-AMP synthase activity. Phosphorylation at Thr-52 and Ser-199 inhibits its cyclic GMP-AMP synthase activity. Ubiquitination at Lys-372 via 'Lys-27'-linked polyubiquitination enhances the cyclic GMP-AMP synthase activity. Monoubiquitination at Lys-335 promotes oligomerization and subsequent activation. Sumoylation at Lys-335, Lys-372 and Lys-382 prevents DNA-binding, oligomerization and nucleotidyltransferase activity. The enzyme activity is impaired by the cleavage by CASP1. In addition to DNA, also activated by collided ribosomes upon translation stress: specifically binds collided ribosomes, promoting its activation and triggering type-I interferon production. In hematopoietic stem cells, binding to circular RNA cia-cGAS inhibits the cyclic GMP-AMP synthase activity. Strongly inhibited by compound RU.521, which is specific for mouse protein. Functionally, nucleotidyltransferase that catalyzes the formation of cyclic GMP-AMP (2',3'-cGAMP) from ATP and GTP and plays a key role in innate immunity. Catalysis involves both the formation of a 2',5' phosphodiester linkage at the GpA step and the formation of a 3',5' phosphodiester linkage at the ApG step, producing c[G(2',5')pA(3',5')p]. Acts as a key DNA sensor: directly binds double-stranded DNA (dsDNA), inducing the formation of liquid-like droplets in which CGAS is activated, leading to synthesis of 2',3'-cGAMP, a second messenger that binds to and activates STING1, thereby triggering type-I interferon production. Preferentially binds long dsDNA (around 45 bp) and forms ladder-like networks that function cooperatively to stabilize individual cGAS-dsDNA complexes. Acts as a key foreign DNA sensor, the presence of double-stranded DNA (dsDNA) in the cytoplasm being a danger signal that triggers the immune responses. Has antiviral activity by sensing the presence of dsDNA from DNA viruses in the cytoplasm. Also acts as an innate immune sensor of infection by retroviruses by detecting the presence of reverse-transcribed DNA in the cytosol. Detection of retroviral reverse-transcribed DNA in the cytosol may be indirect and be mediated via interaction with PQBP1, which directly binds reverse-transcribed retroviral DNA. Also detects the presence of DNA from bacteria. 2',3'-cGAMP can be transferred from producing cells to neighboring cells through gap junctions, leading to promote STING1 activation and convey immune response to connecting cells. 2',3'-cGAMP can also be transferred between cells by virtue of packaging within viral particles contributing to IFN-induction in newly infected cells in a cGAS-independent but STING1-dependent manner. Also senses the presence of neutrophil extracellular traps (NETs) that are translocated to the cytosol following phagocytosis, leading to synthesis of 2',3'-cGAMP. In addition to foreign DNA, can also be activated by endogenous nuclear or mitochondrial DNA. When self-DNA leaks into the cytosol during cellular stress (such as mitochondrial stress, DNA damage, mitotic arrest or senescence), or is present in form of cytosolic micronuclei, CGAS is activated leading to a state of sterile inflammation. Acts as a regulator of cellular senescence by binding to cytosolic chromatin fragments that are present in senescent cells, leading to trigger type-I interferon production via STING1 and promote cellular senescence. Also involved in the inflammatory response to genome instability and double-stranded DNA breaks: acts by localizing to micronuclei arising from genome instability. Micronuclei, which as frequently found in cancer cells, consist of chromatin surrounded by its own nuclear membrane: following breakdown of the micronuclear envelope, a process associated with chromothripsis, CGAS binds self-DNA exposed to the cytosol, leading to 2',3'-cGAMP synthesis and subsequent activation of STING1 and type-I interferon production. In a healthy cell, CGAS is however kept inactive even in cellular events that directly expose it to self-DNA, such as mitosis, when cGAS associates with chromatin directly after nuclear envelope breakdown or remains in the form of postmitotic persistent nuclear cGAS pools bound to chromatin. Nuclear CGAS is inactivated by chromatin via direct interaction with nucleosomes, which block CGAS from DNA binding and thus prevent CGAS-induced autoimmunity. Also acts as a suppressor of DNA repair in response to DNA damage: inhibits homologous recombination repair by interacting with PARP1, the CGAS-PARP1 interaction leading to impede the formation of the PARP1-TIMELESS complex. In addition to DNA, also sense translation stress: in response to translation stress, translocates to the cytosol and associates with collided ribosomes, promoting its activation and triggering type-I interferon production. In Mus musculus (Mouse), this protein is Cyclic GMP-AMP synthase.